Reading from the N-terminus, the 277-residue chain is Large ribosomal subunit protein uL2 (277 aa).

Positions valine 223–threonine 264 are disordered.

The protein belongs to the universal ribosomal protein uL2 family. Part of the 50S ribosomal subunit. Forms a bridge to the 30S subunit in the 70S ribosome.

Functionally, one of the primary rRNA binding proteins. Required for association of the 30S and 50S subunits to form the 70S ribosome, for tRNA binding and peptide bond formation. It has been suggested to have peptidyltransferase activity; this is somewhat controversial. Makes several contacts with the 16S rRNA in the 70S ribosome. The polypeptide is Large ribosomal subunit protein uL2 (Nitrosomonas eutropha (strain DSM 101675 / C91 / Nm57)).